The following is a 521-amino-acid chain: Cytochrome P450 1A1 (521 aa).

Phe229 provides a ligand contact to substrate. Cys463 contacts heme.

The protein belongs to the cytochrome P450 family. Heme serves as cofactor.

The protein resides in the endoplasmic reticulum membrane. It is found in the microsome membrane. It catalyses the reaction an organic molecule + reduced [NADPH--hemoprotein reductase] + O2 = an alcohol + oxidized [NADPH--hemoprotein reductase] + H2O + H(+). Cytochromes P450 are a group of heme-thiolate monooxygenases. They oxidize a variety of structurally unrelated compounds, including steroids, fatty acids, and xenobiotics. In Chelon saliens (Leaping mullet), this protein is Cytochrome P450 1A1 (cyp1a1).